The sequence spans 255 residues: Small ribosomal subunit protein eS1 (255 aa).

The segment covering 1–18 (MAVGKNKRLSKGKKGLKK) has biased composition (basic residues). A disordered region spans residues 1–28 (MAVGKNKRLSKGKKGLKKRTQDPFSRKD). Ala2 carries the post-translational modification N-acetylalanine; partial. Over residues 19–28 (RTQDPFSRKD) the composition is skewed to basic and acidic residues.

Belongs to the eukaryotic ribosomal protein eS1 family. As to quaternary structure, component of the small ribosomal subunit. Mature ribosomes consist of a small (40S) and a large (60S) subunit. The 40S subunit contains about 33 different proteins and 1 molecule of RNA (18S). The 60S subunit contains about 49 different proteins and 3 molecules of RNA (25S, 5.8S and 5S).

It localises to the cytoplasm. This is Small ribosomal subunit protein eS1 from Paracoccidioides lutzii (strain ATCC MYA-826 / Pb01) (Paracoccidioides brasiliensis).